A 180-amino-acid chain; its full sequence is Ribulose bisphosphate carboxylase small subunit 1A, chloroplastic (180 aa).

Residues 1 to 54 constitute a chloroplast transit peptide; it reads MASSMLSSATMVASPAQATMVAPFNGLKSSAAFPATRKANNDITSITSNGGRVN. A Phosphoserine modification is found at Ser-113.

It belongs to the RuBisCO small chain family. As to quaternary structure, heterohexadecamer of 8 large and 8 small subunits.

The protein resides in the plastid. Its subcellular location is the chloroplast membrane. It localises to the chloroplast stroma. In terms of biological role, ruBisCO catalyzes two reactions: the carboxylation of D-ribulose 1,5-bisphosphate, the primary event in carbon dioxide fixation, as well as the oxidative fragmentation of the pentose substrate. Both reactions occur simultaneously and in competition at the same active site. Although the small subunit is not catalytic it is essential for maximal activity. This is Ribulose bisphosphate carboxylase small subunit 1A, chloroplastic (RBCS-1A) from Arabidopsis thaliana (Mouse-ear cress).